The primary structure comprises 592 residues: K(+) efflux antiporter 4 (592 aa).

The first 35 residues, 1-35 (MRRCKNNTDKFSVITMRLLTLLLICTFFFFFSFAY), serve as a signal peptide directing secretion. Transmembrane regions (helical) follow at residues 169-189 (LISDLVVVIVSATCGGIAFAC), 193-213 (PVITGYLLAGSIIGPGGLSFV), 221-241 (TVAQFGVIFLLFALGLEFSAA), 248-268 (AVAIPGGLLQIFLFMCLSGIT), 279-299 (GIFVGAFLSMSSTAVVLKFLM), 313-333 (VGTLILQDCAVGLLFALLPVL), 343-363 (VLSMAKSLAILIAFLGALFVL), 388-408 (LAAVAFCLLVAWCSDKLGLSL), 437-457 (NFFAALFLASIGMLIHMHFLW), 462-482 (ILLAAVLLVIVIKTVVVAIVV), 491-511 (TAVLVGMSLAQIGEFAFVLLS), and 535-555 (LVTTPLLFKLIPAVVHLGVLL).

It belongs to the monovalent cation:proton antiporter 2 (CPA2) transporter (TC 2.A.37) family. KEA (TC 2.A.37.1) subfamily. In terms of tissue distribution, expressed in roots, stems, leaves, flowers and silique.

The protein resides in the golgi apparatus membrane. It localises to the golgi apparatus. It is found in the trans-Golgi network membrane. Its subcellular location is the prevacuolar compartment membrane. The protein localises to the endomembrane system. It catalyses the reaction K(+)(in) + H(+)(out) = K(+)(out) + H(+)(in). Electroneutral K(+)/H(+) efflux antiporter involved in K(+) homeostasis and osmotic adjustment. Together with KEA5 and KEA6, promotes growth and development, and facilitates endosomal pH and ions homeostasis, as well as salt tolerance (e.g. K(+), NaCl and LiCl), probably by supporting cell wall biosynthesis during rapid etiolated seedling growth. The protein is K(+) efflux antiporter 4 of Arabidopsis thaliana (Mouse-ear cress).